The following is a 58-amino-acid chain: Small ribosomal subunit protein bS21 (58 aa).

The interval 37-58 is disordered; that stretch reads FYDKPSVKKRAKSKAAAKYRGR. Residues 43–58 are compositionally biased toward basic residues; it reads VKKRAKSKAAAKYRGR.

It belongs to the bacterial ribosomal protein bS21 family.

This Chlamydia muridarum (strain MoPn / Nigg) protein is Small ribosomal subunit protein bS21 (rpsU).